A 72-amino-acid chain; its full sequence is Translation initiation factor IF-1 (72 aa).

The region spanning 1-72 (MSKEENIEMQ…TKGRIIFRSR (72 aa)) is the S1-like domain.

The protein belongs to the IF-1 family. In terms of assembly, component of the 30S ribosomal translation pre-initiation complex which assembles on the 30S ribosome in the order IF-2 and IF-3, IF-1 and N-formylmethionyl-tRNA(fMet); mRNA recruitment can occur at any time during PIC assembly.

The protein resides in the cytoplasm. One of the essential components for the initiation of protein synthesis. Stabilizes the binding of IF-2 and IF-3 on the 30S subunit to which N-formylmethionyl-tRNA(fMet) subsequently binds. Helps modulate mRNA selection, yielding the 30S pre-initiation complex (PIC). Upon addition of the 50S ribosomal subunit IF-1, IF-2 and IF-3 are released leaving the mature 70S translation initiation complex. This chain is Translation initiation factor IF-1, found in Buchnera aphidicola subsp. Acyrthosiphon pisum (strain APS) (Acyrthosiphon pisum symbiotic bacterium).